The following is a 145-amino-acid chain: Hemoglobin fetal subunit beta (145 aa).

Positions 1-145 constitute a Globin domain; the sequence is MLSAEEKAAV…VANALAHRYH (145 aa). Residues His-62 and His-91 each contribute to the heme b site.

Belongs to the globin family. Heterotetramer of two alpha chains and two beta chains. Red blood cells.

Functionally, involved in oxygen transport from the lung to the various peripheral tissues. In Bos taurus (Bovine), this protein is Hemoglobin fetal subunit beta.